Here is a 338-residue protein sequence, read N- to C-terminus: Fructose-1,6-bisphosphatase 1 (338 aa).

The residue at position 2 (A2) is an N-acetylalanine. Residues 18–22 (VMEEG) and 28–32 (TGEMT) each bind AMP. Mg(2+)-binding residues include D69 and E98. 113-114 (KY) contacts AMP. 3 residues coordinate Mg(2+): D119, L121, and D122. 122 to 125 (DGSS) contacts substrate. Position 141 (R141) interacts with AMP. N6-succinyllysine is present on K151. Substrate-binding positions include 213–216 (NEGY), 244–249 (RYVGSM), Y265, and 275–277 (KLR). Phosphotyrosine occurs at positions 216, 245, and 265. Mg(2+) is bound at residue E281.

The protein belongs to the FBPase class 1 family. As to quaternary structure, homotetramer. It depends on Mg(2+) as a cofactor.

It catalyses the reaction beta-D-fructose 1,6-bisphosphate + H2O = beta-D-fructose 6-phosphate + phosphate. It functions in the pathway carbohydrate biosynthesis; gluconeogenesis. With respect to regulation, subject to complex allosteric regulation. The enzyme can assume an active R-state, or an inactive T-state. Intermediate conformations may exist. AMP acts as an allosteric inhibitor. AMP binding affects the turnover of bound substrate and not the affinity for substrate. Fructose 2,6-bisphosphate acts as a competitive inhibitor. Fructose 2,6-bisphosphate and AMP have synergistic effects. Its function is as follows. Catalyzes the hydrolysis of fructose 1,6-bisphosphate to fructose 6-phosphate in the presence of divalent cations, acting as a rate-limiting enzyme in gluconeogenesis. Plays a role in regulating glucose sensing and insulin secretion of pancreatic beta-cells. Appears to modulate glycerol gluconeogenesis in liver. Important regulator of appetite and adiposity; increased expression of the protein in liver after nutrient excess increases circulating satiety hormones and reduces appetite-stimulating neuropeptides and thus seems to provide a feedback mechanism to limit weight gain. This Oryctolagus cuniculus (Rabbit) protein is Fructose-1,6-bisphosphatase 1 (FBP1).